A 323-amino-acid polypeptide reads, in one-letter code: Syntaxin-42 (323 aa).

Topologically, residues 1–302 (MATRNRTTVY…QREGAMVKCA (302 aa)) are cytoplasmic. Positions 227–289 (QHVSAERERE…EEGYKQLQKA (63 aa)) constitute a t-SNARE coiled-coil homology domain. A helical; Anchor for type IV membrane protein transmembrane segment spans residues 303–323 (TILLVLCLIMIVLLILKNILF).

It belongs to the syntaxin family. In terms of assembly, interacts with VTI12 and SYP61 to form a t-SNARE complex and with VPS45. As to expression, expressed at low levels in roots, stems, flowers and leaves.

The protein resides in the golgi apparatus. Its subcellular location is the trans-Golgi network membrane. In terms of biological role, contributes to the regulation of secretory and vacuolar transport pathways in the post-Golgi network, and to the maintenance of the Golgi apparatus and trans-Golgi network (TGN) morphologies. Vesicle trafficking protein that functions in the secretory pathway and mediates liposome fusion. Required for extracellular resistance responses to a fungal pathogen. Also involved in the protection of chloroplasts from salicylic acid-dependent biotic stress. In Arabidopsis thaliana (Mouse-ear cress), this protein is Syntaxin-42.